The sequence spans 118 residues: Ribonuclease P protein component (118 aa).

This sequence belongs to the RnpA family. Consists of a catalytic RNA component (M1 or rnpB) and a protein subunit.

The catalysed reaction is Endonucleolytic cleavage of RNA, removing 5'-extranucleotides from tRNA precursor.. RNaseP catalyzes the removal of the 5'-leader sequence from pre-tRNA to produce the mature 5'-terminus. It can also cleave other RNA substrates such as 4.5S RNA. The protein component plays an auxiliary but essential role in vivo by binding to the 5'-leader sequence and broadening the substrate specificity of the ribozyme. The protein is Ribonuclease P protein component of Rickettsia rickettsii (strain Iowa).